We begin with the raw amino-acid sequence, 189 residues long: Thymidine kinase (189 aa).

ATP is bound by residues 9–16 (GTMNSGKT) and 85–88 (DESQ). E86 (proton acceptor) is an active-site residue. Zn(2+)-binding residues include C143, C146, C180, and H183.

This sequence belongs to the thymidine kinase family. Homotetramer.

The protein localises to the cytoplasm. It carries out the reaction thymidine + ATP = dTMP + ADP + H(+). The protein is Thymidine kinase of Streptococcus pyogenes serotype M6 (strain ATCC BAA-946 / MGAS10394).